A 552-amino-acid chain; its full sequence is CTP synthase (552 aa).

The segment at 1 to 270 is amidoligase domain; the sequence is MTKYVFVTGG…DRIICDELKL (270 aa). Residue serine 13 participates in CTP binding. Serine 13 provides a ligand contact to UTP. Residues 14 to 19 and aspartate 71 each bind ATP; that span reads SLGKGI. Aspartate 71 and glutamate 144 together coordinate Mg(2+). CTP is bound by residues 151 to 153, 191 to 196, and lysine 227; these read DIE and KTKPTQ. UTP-binding positions include 191–196 and lysine 227; that span reads KTKPTQ. Residues 295-547 enclose the Glutamine amidotransferase type-1 domain; sequence TIGMVGKYVD…VEAALANKQA (253 aa). Glycine 356 serves as a coordination point for L-glutamine. The Nucleophile; for glutamine hydrolysis role is filled by cysteine 383. Residues 384–387, glutamate 407, and arginine 473 contribute to the L-glutamine site; that span reads LGMQ. Catalysis depends on residues histidine 520 and glutamate 522.

This sequence belongs to the CTP synthase family. Homotetramer.

It carries out the reaction UTP + L-glutamine + ATP + H2O = CTP + L-glutamate + ADP + phosphate + 2 H(+). It catalyses the reaction L-glutamine + H2O = L-glutamate + NH4(+). The enzyme catalyses UTP + NH4(+) + ATP = CTP + ADP + phosphate + 2 H(+). The protein operates within pyrimidine metabolism; CTP biosynthesis via de novo pathway; CTP from UDP: step 2/2. Allosterically activated by GTP, when glutamine is the substrate; GTP has no effect on the reaction when ammonia is the substrate. The allosteric effector GTP functions by stabilizing the protein conformation that binds the tetrahedral intermediate(s) formed during glutamine hydrolysis. Inhibited by the product CTP, via allosteric rather than competitive inhibition. Its function is as follows. Catalyzes the ATP-dependent amination of UTP to CTP with either L-glutamine or ammonia as the source of nitrogen. Regulates intracellular CTP levels through interactions with the four ribonucleotide triphosphates. The sequence is that of CTP synthase from Burkholderia vietnamiensis (strain G4 / LMG 22486) (Burkholderia cepacia (strain R1808)).